A 213-amino-acid chain; its full sequence is MRPGTGQGGLEAPGEPGPNLRQRWPLLLLGLAVVTHGLLRPTAASQSRALGPGAPGGSSRSSLRSRWGRFLLQRGSWTGPRCWPRGFQSKHNSVTHVFGSGTQLTVLSQPKATPSVTLFPPSSEELQANKATLVCLMNDFYPGILTVTWKADGTPITQGVEMTTPSKQSNNKYAASSYLSLTPEQWRSRRSYSCQVMHEGSTVEKTVAPAECS.

An N-terminal signal peptide occupies residues Met1–Gly37. The tract at residues Val97–Ser108 is j region. Residues Gln109–Ser213 are c region. Residues Pro114 to Ala208 form the Ig-like C1-type domain. Residues Cys135 and Cys194 are joined by a disulfide bond.

Associates non-covalently with VPREB1. Interacts with SYNV1/HRD1 (via N-terminus); this interaction leads to increased IGLL1 ubiquitination and degradation in pre-B cells, possibly through a lysosomal, not proteasomal, pathway. Expressed only in pre-B-cells and a special B-cell line (which is surface Ig negative).

The protein localises to the endoplasmic reticulum. Its subcellular location is the secreted. Its function is as follows. Critical for B-cell development. The polypeptide is Immunoglobulin lambda-like polypeptide 1 (IGLL1) (Homo sapiens (Human)).